Here is an 83-residue protein sequence, read N- to C-terminus: Beta-defensin 19 (83 aa).

The first 19 residues, 1–19, serve as a signal peptide directing secretion; it reads MRLALLLLAILVATELVVS. Intrachain disulfides connect cysteine 27–cysteine 54, cysteine 34–cysteine 48, and cysteine 38–cysteine 55.

This sequence belongs to the beta-defensin family. In terms of tissue distribution, specifically expressed in male gonads (Sertoli cells).

The protein localises to the secreted. Functionally, has antibacterial activity. This Mus musculus (Mouse) protein is Beta-defensin 19 (Defb19).